Here is a 349-residue protein sequence, read N- to C-terminus: GTPase Obg (349 aa).

The Obg domain occupies 1-159; sequence MKFLDEAKVY…RWIWLRLKLI (159 aa). Positions 160–327 constitute an OBG-type G domain; the sequence is ADAGLVGLPN…ALRALVEVIG (168 aa). Residues 166-173, 191-195, 212-215, 279-282, and 308-310 contribute to the GTP site; these read GLPNAGKS, FTTLH, DIPG, NKID, and SGV. Mg(2+)-binding residues include Ser173 and Thr193.

It belongs to the TRAFAC class OBG-HflX-like GTPase superfamily. OBG GTPase family. As to quaternary structure, monomer. Mg(2+) serves as cofactor.

The protein localises to the cytoplasm. An essential GTPase which binds GTP, GDP and possibly (p)ppGpp with moderate affinity, with high nucleotide exchange rates and a fairly low GTP hydrolysis rate. Plays a role in control of the cell cycle, stress response, ribosome biogenesis and in those bacteria that undergo differentiation, in morphogenesis control. This is GTPase Obg from Rhodopseudomonas palustris (strain BisB18).